The primary structure comprises 223 residues: RNA-free ribonuclease P (223 aa).

This sequence belongs to the HARP family.

It catalyses the reaction Endonucleolytic cleavage of RNA, removing 5'-extranucleotides from tRNA precursor.. In terms of biological role, RNA-free RNase P that catalyzes the removal of the 5'-leader sequence from pre-tRNA to produce the mature 5'-terminus. The sequence is that of RNA-free ribonuclease P from Methanococcus maripaludis (strain C5 / ATCC BAA-1333).